The following is a 1162-amino-acid chain: Paired amphipathic helix protein Sin3-like 5 (1162 aa).

Residues 1-37 are disordered; that stretch reads MKRVREEVYVEPQMRGPTVSSRGETNGRPSTISGGGT. Polar residues predominate over residues 18-30; the sequence is TVSSRGETNGRPS. PAH domains lie at 28–109 and 123–193; these read RPST…LPKG and KPVD…LPDF. Disordered regions lie at residues 702-727, 743-779, 803-830, and 1121-1143; these read RVSD…ESCE, QKLP…DDDN, GGQV…SNEG, and KKAT…ELSR. Ser-817 is modified (phosphoserine). Residues 1123–1139 show a composition bias toward polar residues; the sequence is ATLNPTGPENVKTSDSS.

It localises to the nucleus. In terms of biological role, acts as a transcriptional repressor. Plays roles in regulating gene expression and genome stability. The sequence is that of Paired amphipathic helix protein Sin3-like 5 (SNL5) from Arabidopsis thaliana (Mouse-ear cress).